Reading from the N-terminus, the 403-residue chain is S-adenosylmethionine synthase (403 aa).

H16 is an ATP binding site. D18 lines the Mg(2+) pocket. E44 is a binding site for K(+). The L-methionine site is built by E57 and Q100. Positions 100 to 110 are flexible loop; that stretch reads QSNDIAQGVDH. Residues 167–169, 238–239, D247, 253–254, A270, and K274 contribute to the ATP site; these read DAK, RF, and RK. Position 247 (D247) interacts with L-methionine. K278 lines the L-methionine pocket.

The protein belongs to the AdoMet synthase family. Homotetramer; dimer of dimers. It depends on Mg(2+) as a cofactor. K(+) serves as cofactor.

It localises to the cytoplasm. It carries out the reaction L-methionine + ATP + H2O = S-adenosyl-L-methionine + phosphate + diphosphate. Its pathway is amino-acid biosynthesis; S-adenosyl-L-methionine biosynthesis; S-adenosyl-L-methionine from L-methionine: step 1/1. Its function is as follows. Catalyzes the formation of S-adenosylmethionine (AdoMet) from methionine and ATP. The overall synthetic reaction is composed of two sequential steps, AdoMet formation and the subsequent tripolyphosphate hydrolysis which occurs prior to release of AdoMet from the enzyme. This is S-adenosylmethionine synthase from Verminephrobacter eiseniae (strain EF01-2).